Here is a 388-residue protein sequence, read N- to C-terminus: Succinate--CoA ligase [ADP-forming] subunit beta (388 aa).

The 236-residue stretch at K9–E244 folds into the ATP-grasp domain. ATP contacts are provided by residues K46, G53–G55, E99, V102, and E107. Residues N199 and D213 each contribute to the Mg(2+) site. Substrate contacts are provided by residues N264 and G320 to M322.

It belongs to the succinate/malate CoA ligase beta subunit family. In terms of assembly, heterotetramer of two alpha and two beta subunits. It depends on Mg(2+) as a cofactor.

The catalysed reaction is succinate + ATP + CoA = succinyl-CoA + ADP + phosphate. It catalyses the reaction GTP + succinate + CoA = succinyl-CoA + GDP + phosphate. It functions in the pathway carbohydrate metabolism; tricarboxylic acid cycle; succinate from succinyl-CoA (ligase route): step 1/1. Its function is as follows. Succinyl-CoA synthetase functions in the citric acid cycle (TCA), coupling the hydrolysis of succinyl-CoA to the synthesis of either ATP or GTP and thus represents the only step of substrate-level phosphorylation in the TCA. The beta subunit provides nucleotide specificity of the enzyme and binds the substrate succinate, while the binding sites for coenzyme A and phosphate are found in the alpha subunit. The sequence is that of Succinate--CoA ligase [ADP-forming] subunit beta from Anaplasma marginale (strain St. Maries).